The sequence spans 384 residues: Glutamate 5-kinase (384 aa).

An ATP-binding site is contributed by Lys-24. Positions 64, 149, and 161 each coordinate substrate. Residues Thr-181–Asp-182 and Thr-223–Lys-229 each bind ATP. The PUA domain occupies Pro-288–Thr-370.

Belongs to the glutamate 5-kinase family.

The protein resides in the cytoplasm. It carries out the reaction L-glutamate + ATP = L-glutamyl 5-phosphate + ADP. Its pathway is amino-acid biosynthesis; L-proline biosynthesis; L-glutamate 5-semialdehyde from L-glutamate: step 1/2. Functionally, catalyzes the transfer of a phosphate group to glutamate to form L-glutamate 5-phosphate. The polypeptide is Glutamate 5-kinase (Xylella fastidiosa (strain M23)).